The following is a 142-amino-acid chain: Large ribosomal subunit protein uL13 (142 aa).

The protein belongs to the universal ribosomal protein uL13 family. In terms of assembly, part of the 50S ribosomal subunit.

Functionally, this protein is one of the early assembly proteins of the 50S ribosomal subunit, although it is not seen to bind rRNA by itself. It is important during the early stages of 50S assembly. The chain is Large ribosomal subunit protein uL13 from Cronobacter sakazakii (strain ATCC BAA-894) (Enterobacter sakazakii).